We begin with the raw amino-acid sequence, 370 residues long: MKRVGLIGWRGMVGSVLMQRMLEERDFDLIEPVFFTTSNVGGQGPEVGKDIAPLKDAYSIDELKTLDVILTCQGGDYTSEVFPKLREAGWQGYWIDAASSLRMEDDAVIVLDPVNRKVIDQALDAGTRNYIGGNCTVSLMLMALGGLFDAGLVEWMSAMTYQAASGAGAQNMRELLKQMGAAHASVADDLANPASAILDIDRKVAETLRSEAFPTEHFGAPLGGSLIPWIDKELPNGQSREEWKAQAETNKILARFKNPIPVDGICVRVGAMRCHSQALTIKLNKDVPLTDIEGLISQHNPWVKLVPNHREVSVRELTPAAVTGTLSVPVGRLRKLNMGSQYLGAFTVGDQLLWGAAEPLRRMLRILLER.

NADP(+) contacts are provided by residues 10–13, 37–38, and Gln-73; these read RGMV and TS. Arg-102 contacts phosphate. Cys-135 (acyl-thioester intermediate) is an active-site residue. Substrate is bound at residue Gln-162. Residues 165–166 and Pro-193 each bind NADP(+); that span reads SG. Glu-241 contacts substrate. Lys-244 contributes to the phosphate binding site. Arg-268 contributes to the substrate binding site. The active-site Proton acceptor is His-275. Gln-351 is a binding site for NADP(+).

Belongs to the aspartate-semialdehyde dehydrogenase family. Homodimer.

It carries out the reaction L-aspartate 4-semialdehyde + phosphate + NADP(+) = 4-phospho-L-aspartate + NADPH + H(+). Its pathway is amino-acid biosynthesis; L-lysine biosynthesis via DAP pathway; (S)-tetrahydrodipicolinate from L-aspartate: step 2/4. It participates in amino-acid biosynthesis; L-methionine biosynthesis via de novo pathway; L-homoserine from L-aspartate: step 2/3. It functions in the pathway amino-acid biosynthesis; L-threonine biosynthesis; L-threonine from L-aspartate: step 2/5. Functionally, catalyzes the NADPH-dependent formation of L-aspartate-semialdehyde (L-ASA) by the reductive dephosphorylation of L-aspartyl-4-phosphate. The protein is Aspartate-semialdehyde dehydrogenase (asd) of Pseudomonas aeruginosa (strain ATCC 15692 / DSM 22644 / CIP 104116 / JCM 14847 / LMG 12228 / 1C / PRS 101 / PAO1).